A 194-amino-acid chain; its full sequence is Interleukin-18 (194 aa).

Positions 1 to 36 (MAAMSEEGSCVNFKEMMFIDNTLYLIPEDNGDLESD) are excised as a propeptide.

It belongs to the IL-1 family. As to quaternary structure, forms a ternary complex with ligand-binding receptor subunit IL18R1 and signaling receptor subunit IL18RAP at the plasma membrane. Mature IL18 first binds to IL18R1 forming a low affinity binary complex, which then interacts with IL18RAP to form a high affinity ternary complex that signals inside the cell. Interacts with cargo receptor TMED10; the interaction mediates the translocation from the cytoplasm into the ERGIC (endoplasmic reticulum-Golgi intermediate compartment) and thereby secretion. The pro-IL-18 precursor is processed by CASP1 to yield its mature, active form. The pro-IL-18 precursor is however not processed by Casp4/Casp11 in rodents. The pro-IL-18 precursor features autoinhibitory interactions between the propeptide and the post-cleavage-site region, preventing recognition by the IL18R1 receptor. Processing by CASP1 induces conformational changes to generate critical receptor-binding sites. The mature form is then secreted and released in the extracellular milieu by passing through the gasdermin-D (GSDMD) pore. In contrast, cleavage by CASP3 inactivates IL18.

The protein localises to the cytoplasm. Its subcellular location is the cytosol. The protein resides in the secreted. Pro-inflammatory cytokine primarily involved in epithelial barrier repair, polarized T-helper 1 (Th1) cell and natural killer (NK) cell immune responses. Upon binding to IL18R1 and IL18RAP, forms a signaling ternary complex which activates NF-kappa-B, triggering synthesis of inflammatory mediators. Synergizes with IL12/interleukin-12 to induce IFNG synthesis from T-helper 1 (Th1) cells and natural killer (NK) cells. Involved in transduction of inflammation downstream of pyroptosis: its mature form is specifically released in the extracellular milieu by passing through the gasdermin-D (GSDMD) pore. The chain is Interleukin-18 (Il18) from Rattus norvegicus (Rat).